Consider the following 425-residue polypeptide: Septin-7 (425 aa).

A Septin-type G domain is found at Arg-28–Ala-297. Residues Gly-38–Ser-45 form a G1 motif region. Residues Gly-38–Ser-45, Thr-71, Gly-97, Lys-176–Glu-184, Gly-231, and Arg-246 each bind GTP. The tract at residues Asp-94–Gly-97 is G3 motif. A G4 motif region spans residues Ala-175 to Asp-178. A coiled-coil region spans residues Leu-324 to Lys-421.

The protein belongs to the TRAFAC class TrmE-Era-EngA-EngB-Septin-like GTPase superfamily. Septin GTPase family. In terms of assembly, monomer, and homodimer. Nucleotide binding promotes oligomerization. Can form heterooligomers with other family members and form filaments.

It is found in the cytoplasm. The protein localises to the chromosome. It localises to the centromere. The protein resides in the kinetochore. Its subcellular location is the cytoskeleton. It is found in the spindle. The protein localises to the cleavage furrow. It localises to the midbody. The protein resides in the cilium axoneme. In terms of biological role, filament-forming cytoskeletal GTPase. Required for normal organization of the actin cytoskeleton. Required for normal progress through mitosis. Involved in cytokinesis. Plays a role in ciliogenesis and collective cell movements including convergent extension during gastrulation. Controls cell elongation but not polarization during convergent extension. The polypeptide is Septin-7 (Xenopus laevis (African clawed frog)).